The chain runs to 59 residues: Large ribosomal subunit protein bL32c (59 aa).

The tract at residues 37–59 (SRSFSRGNEHPKPKGFSGQQANK) is disordered.

Belongs to the bacterial ribosomal protein bL32 family.

Its subcellular location is the plastid. The protein localises to the chloroplast. The sequence is that of Large ribosomal subunit protein bL32c (rpl32) from Zea mays (Maize).